The sequence spans 256 residues: Nuclear shuttle protein (256 aa).

A Bipartite nuclear localization signal motif is present at residues 18 to 39 (NITNRYPIKRKYVAGHTRPCVR). A Nuclear localization signal motif is present at residues 81-96 (SRGPSGDGRSRDYIKL). Positions 150-187 (ELFGPYSACYVNLRLLNNQQHRYRVLHSVKRFVSSSGD) are interaction with Arabidopsis thaliana NSI protein.

The protein belongs to the begomovirus nuclear shuttle protein family. Binds to single-stranded and double-stranded viral DNA. Interacts with the host nuclear shuttle interacting (NSI) protein. This interaction may allow NSP to recruit NSI monomers to the viral genome and thus regulate nuclear export of viral genome by NSP.

Its subcellular location is the host nucleus. It localises to the host cytoplasm. It is found in the host cell membrane. Binds to the genomic viral ssDNA, shuttles it into and out of the cell nucleus. Begomoviruses use 2 proteins to transport their DNA from cell to cell. The nuclear shuttle protein (NSP) shuttles it between nucleus and cytoplasm and the movement protein (MP) probably transports the DNA-NSP complex to the cell periphery and facilitates movement across the cell wall. The chain is Nuclear shuttle protein from Hewittia sublobata (Coralbush).